The sequence spans 122 residues: Large ribosomal subunit protein uL14 (122 aa).

This sequence belongs to the universal ribosomal protein uL14 family. In terms of assembly, part of the 50S ribosomal subunit. Forms a cluster with proteins L3 and L19. In the 70S ribosome, L14 and L19 interact and together make contacts with the 16S rRNA in bridges B5 and B8.

In terms of biological role, binds to 23S rRNA. Forms part of two intersubunit bridges in the 70S ribosome. This chain is Large ribosomal subunit protein uL14, found in Salinibacter ruber (strain DSM 13855 / M31).